A 1574-amino-acid chain; its full sequence is Pentafunctional AROM polypeptide (1574 aa).

The 3-dehydroquinate synthase stretch occupies residues 1–384 (MSCSNNTEPT…HEPRATTVED (384 aa)). NAD(+) is bound by residues 49-51 (DTN), 85-88 (EISK), 116-118 (GGV), and D121. R132 provides a ligand contact to 7-phospho-2-dehydro-3-deoxy-D-arabino-heptonate. 141–142 (TT) lines the NAD(+) pocket. Residues D148 and K154 each coordinate 7-phospho-2-dehydro-3-deoxy-D-arabino-heptonate. K163 is a binding site for NAD(+). Residue N164 coordinates 7-phospho-2-dehydro-3-deoxy-D-arabino-heptonate. Residues 181–184 (FLET) and N192 contribute to the NAD(+) site. E196 lines the Zn(2+) pocket. 7-phospho-2-dehydro-3-deoxy-D-arabino-heptonate-binding positions include 196 to 199 (EVIK) and K250. Residue E260 is the Proton acceptor; for 3-dehydroquinate synthase activity of the active site. 7-phospho-2-dehydro-3-deoxy-D-arabino-heptonate-binding positions include 264-268 (RNLLN) and H271. Position 271 (H271) interacts with Zn(2+). Catalysis depends on H275, which acts as the Proton acceptor; for 3-dehydroquinate synthase activity. 2 residues coordinate 7-phospho-2-dehydro-3-deoxy-D-arabino-heptonate: H287 and K356. H287 is a Zn(2+) binding site. An EPSP synthase region spans residues 397–837 (ITPGVSTKLA…WDTLSQSFGL (441 aa)). The active-site For EPSP synthase activity is the C819. Residues 858–1052 (TRSVFIVGMR…TAKEQSFFVS (195 aa)) form a shikimate kinase region. 865-872 (GMRGAGKT) is a binding site for ATP. The segment at 1053-1266 (LTVPSVDSAV…AAPGQLSAAE (214 aa)) is 3-dehydroquinase. H1169 functions as the Proton acceptor; for 3-dehydroquinate dehydratase activity in the catalytic mechanism. K1197 functions as the Schiff-base intermediate with substrate; for 3-dehydroquinate dehydratase activity in the catalytic mechanism. Residues 1279 to 1574 (AQSFHLFGKP…NGDEIPTSTD (296 aa)) form a shikimate dehydrogenase region.

It in the N-terminal section; belongs to the sugar phosphate cyclases superfamily. Dehydroquinate synthase family. The protein in the 2nd section; belongs to the EPSP synthase family. In the 3rd section; belongs to the shikimate kinase family. This sequence in the 4th section; belongs to the type-I 3-dehydroquinase family. It in the C-terminal section; belongs to the shikimate dehydrogenase family. Homodimer. It depends on Zn(2+) as a cofactor.

Its subcellular location is the cytoplasm. It carries out the reaction 7-phospho-2-dehydro-3-deoxy-D-arabino-heptonate = 3-dehydroquinate + phosphate. It catalyses the reaction 3-dehydroquinate = 3-dehydroshikimate + H2O. The catalysed reaction is shikimate + NADP(+) = 3-dehydroshikimate + NADPH + H(+). The enzyme catalyses shikimate + ATP = 3-phosphoshikimate + ADP + H(+). It carries out the reaction 3-phosphoshikimate + phosphoenolpyruvate = 5-O-(1-carboxyvinyl)-3-phosphoshikimate + phosphate. It functions in the pathway metabolic intermediate biosynthesis; chorismate biosynthesis; chorismate from D-erythrose 4-phosphate and phosphoenolpyruvate: step 2/7. Its pathway is metabolic intermediate biosynthesis; chorismate biosynthesis; chorismate from D-erythrose 4-phosphate and phosphoenolpyruvate: step 3/7. The protein operates within metabolic intermediate biosynthesis; chorismate biosynthesis; chorismate from D-erythrose 4-phosphate and phosphoenolpyruvate: step 4/7. It participates in metabolic intermediate biosynthesis; chorismate biosynthesis; chorismate from D-erythrose 4-phosphate and phosphoenolpyruvate: step 5/7. It functions in the pathway metabolic intermediate biosynthesis; chorismate biosynthesis; chorismate from D-erythrose 4-phosphate and phosphoenolpyruvate: step 6/7. Its function is as follows. The AROM polypeptide catalyzes 5 consecutive enzymatic reactions in prechorismate polyaromatic amino acid biosynthesis. This chain is Pentafunctional AROM polypeptide, found in Verticillium alfalfae (strain VaMs.102 / ATCC MYA-4576 / FGSC 10136) (Verticillium wilt of alfalfa).